Reading from the N-terminus, the 551-residue chain is Protein GPR107 (551 aa).

The first 33 residues, 1–33 (MAVRVPLGCTGSFCPRLLPLLALLELLVDPSLG), serve as a signal peptide directing secretion. At 34-262 (RVHHLALKDD…YLSAGEIPLP (229 aa)) the chain is on the extracellular side. Residue N64 is glycosylated (N-linked (GlcNAc...) asparagine). Residues 127–183 (GVKVRSPPEAGKQLPEIVFSKDEKVPSRSQEPAVSSNPKDSKVQRTPDGSKAQRSTV) are disordered. Residues 153 to 164 (SRSQEPAVSSNP) are compositionally biased toward polar residues. An N-linked (GlcNAc...) asparagine glycan is attached at N209. Residues 263–283 (KLYVSMALLFFLSGTVWIHIL) form a helical membrane-spanning segment. At 284–292 (RKRRNDVFK) the chain is on the cytoplasmic side. A helical transmembrane segment spans residues 293–313 (IHWLMAALPFTKSLSLVFHAI). The Extracellular portion of the chain corresponds to 314–336 (DYHYISSQGFPIEGWAVVYYITH). A helical transmembrane segment spans residues 337–357 (LLKGALLFITIALIGTGWAFI). Residues 358–367 (KHILSDKDKK) lie on the Cytoplasmic side of the membrane. The helical transmembrane segment at 368–388 (IFMIVIPLQVLANVAYIIIES) threads the bilayer. The Extracellular segment spans residues 389-401 (TEEGTTEYGLWKD). A helical transmembrane segment spans residues 402 to 422 (SLFLVDLLCCGAILFPVVWSI). The Cytoplasmic portion of the chain corresponds to 423-443 (RHLQEASATDGKAAINLAKLK). The chain crosses the membrane as a helical span at residues 444–466 (LFRHYYVLIVCYIYFTRIIAFLL). Over 467–475 (KFAVPFQWK) the chain is Extracellular. A helical transmembrane segment spans residues 476–495 (WLYQLLDETATLVFFVLTGY). At 496–551 (KFRPASDNPYLQLSQEEDDLEMESVVTTSGVMENMKKVKKVSNGAVEPQGSWEGTA) the chain is on the cytoplasmic side.

It belongs to the LU7TM family. In terms of processing, cleaved by FURIN to yield two fragments that remain associated via a disulfide bond. As to expression, widely expressed. Not detected in the duodenum, nor in the exocrine pancreas.

Its subcellular location is the cell membrane. The protein localises to the golgi apparatus. The protein resides in the trans-Golgi network membrane. Functionally, has been proposed to act as a receptor for neuronostatin, a peptide derived from the somatostatin/SST precursor. Involved in blood sugar regulation through the induction of glucagon in response to low glucose. This chain is Protein GPR107 (Gpr107), found in Rattus norvegicus (Rat).